A 424-amino-acid polypeptide reads, in one-letter code: MTDFGHDVWWLVVAKAIAIFVFLMLTVLVAILAERKLLGRMQLRPGPNRVGPKGSLQSLADGIKLALKESITPGGIDRFVYFVAPIISVIPAFTAFAFIPFGPVVSVFGHRTPLQLTDLPVAVLFILGLSAIGVYGIVLGGWASGSTYPLLGGVRSTAQVISYEVAMGLSFAAVFLYAGSMSTSQIIAAQDRVWYIFLLLPSFVIYLISMVGETNRAPFDLPEAEGELVAGFHTEYSSLKFAMFMLAEYVNMTTVSALAATLFLGGWHAPWPLNLWHGANAGWWPVLWFTAKVWGFLFMYFWLRATLPRLRYDQFMALGWKLLIPVSLVWVLIAAVIRTLRNQGYQYWTPALVVSSIVVAAILVMSLRKPFSTPNAVTKARRRGKQPAAGPDEQGALEPLFPTPPLPMKPLAQPVGASKENARG.

A run of 9 helical transmembrane segments spans residues Leu-11–Ile-31, Phe-79–Ile-99, Leu-119–Leu-139, Val-160–Ser-180, Val-193–Glu-213, Val-255–Leu-275, Trp-283–Leu-303, Ala-317–Ile-337, and Tyr-347–Leu-367. The interval Ala-376–Gly-424 is disordered.

It belongs to the complex I subunit 1 family. As to quaternary structure, NDH-1 is composed of 14 different subunits. Subunits NuoA, H, J, K, L, M, N constitute the membrane sector of the complex.

The protein resides in the cell membrane. It carries out the reaction a quinone + NADH + 5 H(+)(in) = a quinol + NAD(+) + 4 H(+)(out). Its function is as follows. NDH-1 shuttles electrons from NADH, via FMN and iron-sulfur (Fe-S) centers, to quinones in the respiratory chain. The immediate electron acceptor for the enzyme in this species is believed to be menaquinone. Couples the redox reaction to proton translocation (for every two electrons transferred, four hydrogen ions are translocated across the cytoplasmic membrane), and thus conserves the redox energy in a proton gradient. This subunit may bind ubiquinone. In Mycobacterium ulcerans (strain Agy99), this protein is NADH-quinone oxidoreductase subunit H.